The following is a 183-amino-acid chain: Inner membrane-spanning protein YciB (183 aa).

The next 5 membrane-spanning stretches (helical) occupy residues 22–44 (VQAA…RILF), 53–73 (IVGL…DLAF), 76–96 (WKVT…QYVF), 121–141 (LGWA…SQLF), and 153–173 (GFTG…YPYI).

The protein belongs to the YciB family.

It is found in the cell inner membrane. Plays a role in cell envelope biogenesis, maintenance of cell envelope integrity and membrane homeostasis. The chain is Inner membrane-spanning protein YciB from Haemophilus ducreyi (strain 35000HP / ATCC 700724).